Here is an 878-residue protein sequence, read N- to C-terminus: Outer membrane usher protein FimD (878 aa).

An N-terminal signal peptide occupies residues 1-45 (MSYLNLRLYQRNTQCLHIRKHRLAGFFVRLVVACAFAAQAPLSSA). A disulfide bridge links C855 with C877.

This sequence belongs to the fimbrial export usher family.

It is found in the cell outer membrane. Involved in the export and assembly of FimA fimbrial subunits across the outer membrane. This is Outer membrane usher protein FimD (fimD) from Escherichia coli (strain K12).